A 224-amino-acid chain; its full sequence is Cytidylate kinase (224 aa).

11–19 (GPASAGKST) is an ATP binding site.

This sequence belongs to the cytidylate kinase family. Type 1 subfamily.

The protein localises to the cytoplasm. It carries out the reaction CMP + ATP = CDP + ADP. The catalysed reaction is dCMP + ATP = dCDP + ADP. The sequence is that of Cytidylate kinase from Ligilactobacillus salivarius (strain UCC118) (Lactobacillus salivarius).